A 303-amino-acid polypeptide reads, in one-letter code: Protoheme IX farnesyltransferase (303 aa).

9 consecutive transmembrane segments (helical) span residues 30–50, 54–74, 101–121, 123–143, 150–170, 178–198, 219–241, 245–262, and 279–299; these read VMSL…STVS, AMIA…LNMW, ALIF…YFAN, ISAV…TIWL, NIVI…TIAT, ITFF…LSLY, STKI…PYAI, GLVF…YNIL, and AKTI…IFLI.

The protein belongs to the UbiA prenyltransferase family. Protoheme IX farnesyltransferase subfamily.

It localises to the cell inner membrane. The catalysed reaction is heme b + (2E,6E)-farnesyl diphosphate + H2O = Fe(II)-heme o + diphosphate. The protein operates within porphyrin-containing compound metabolism; heme O biosynthesis; heme O from protoheme: step 1/1. Converts heme B (protoheme IX) to heme O by substitution of the vinyl group on carbon 2 of heme B porphyrin ring with a hydroxyethyl farnesyl side group. This Pelagibacter ubique (strain HTCC1062) protein is Protoheme IX farnesyltransferase.